The following is a 392-amino-acid chain: Peptidoglycan hydrolase PcsB (392 aa).

The first 27 residues, 1 to 27 (MKKKILASLLLSTVMVSQVAVLTTAHA), serve as a signal peptide directing secretion. Coiled coils occupy residues 34 to 96 (IAAQ…LSKN) and 191 to 227 (TKQA…AEAE). The interacts with large extracellular loop of FtsX stretch occupies residues 47–267 (QQQEAQKQVD…TAQVQAVSES (221 aa)). In terms of domain architecture, Peptidase C51 spans 267-390 (SAAAPVRAKV…TSEGFVTYIY (124 aa)).

Homodimer. Interacts (via N-terminal coiled coil domain) with FtsX (via large extracellular loop). This interaction directs PcsB to equatorial and septal sites of dividing cells. Interacts with FtsE.

It localises to the cell membrane. The protein localises to the cell septum. Its subcellular location is the secreted. With respect to regulation, lacks peptidoglycan-hydrolase activity in vitro, probably due to auto-inhibition by the CC domain. In the homodimer, interaction between the CC domain in one monomer and the hydrolase active site in the peptidase C51/CHAP domain in the other monomer probably mediates auto-inhibition of the hydrolase activity. Functionally, peptidoglycan-hydrolase activity. Required in maintaining normal growth and cellular morphology. Involved in splitting of the septum during cell division. This chain is Peptidoglycan hydrolase PcsB, found in Streptococcus pneumoniae serotype 2 (strain D39 / NCTC 7466).